The chain runs to 354 residues: Nicotinate-nucleotide--dimethylbenzimidazole phosphoribosyltransferase (354 aa).

Residue Glu319 is the Proton acceptor of the active site.

Belongs to the CobT family.

The enzyme catalyses 5,6-dimethylbenzimidazole + nicotinate beta-D-ribonucleotide = alpha-ribazole 5'-phosphate + nicotinate + H(+). It functions in the pathway nucleoside biosynthesis; alpha-ribazole biosynthesis; alpha-ribazole from 5,6-dimethylbenzimidazole: step 1/2. Its function is as follows. Catalyzes the synthesis of alpha-ribazole-5'-phosphate from nicotinate mononucleotide (NAMN) and 5,6-dimethylbenzimidazole (DMB). The sequence is that of Nicotinate-nucleotide--dimethylbenzimidazole phosphoribosyltransferase from Chlorobium chlorochromatii (strain CaD3).